Here is a 135-residue protein sequence, read N- to C-terminus: MATVQQLVGRWRLVESKGFDEYMKEVGVGMALRKVGAMAKPDCIITSDGKNLSIKTESTLKTTQFSCKLGEKFEETTADGRKTQTVCNFTDGALVQHQEWDGKESTITRKLEDGKLVVVCVMNNVTCTRVYEKVE.

A2 carries the N-acetylalanine modification. K17 carries the N6-acetyllysine modification. Y22 is modified (phosphotyrosine; by Tyr-kinases). Residues 24–34 (KEVGVGMALRK) carry the Nuclear localization signal motif. N-eicosanoyl ethanolamine contacts are provided by C43 and R109. C120 and C127 are disulfide-bonded. 129–131 (RVY) contacts (9Z,12Z)-octadecadienoate. Y131 contributes to the N-eicosanoyl ethanolamine binding site. Residue Y131 coordinates hexadecanoate. Y131 is subject to Phosphotyrosine.

This sequence belongs to the calycin superfamily. Fatty-acid binding protein (FABP) family. Monomer. Most abundant in lens and retina (found in the mueller cells), moderately abundant in heart and testis (found in the Sertoli cells), and present in very low amounts in lung.

Its subcellular location is the cytoplasm. The protein resides in the nucleus. It is found in the synapse. It localises to the postsynaptic density. The protein localises to the secreted. The catalysed reaction is hexadecanoate(out) = hexadecanoate(in). It catalyses the reaction (9Z,12Z)-octadecadienoate(out) = (9Z,12Z)-octadecadienoate(in). It carries out the reaction (9Z)-octadecenoate(out) = (9Z)-octadecenoate(in). Functionally, intracellular carrier for long-chain fatty acids and related active lipids, such as endocannabinoids, that regulate the metabolism and actions of the ligands they bind. In addition to the cytosolic transport, selectively delivers specific fatty acids from the cytosol to the nucleus, wherein they activate nuclear receptors. Delivers retinoic acid to the nuclear receptor peroxisome proliferator-activated receptor delta; which promotes proliferation and survival. May also serve as a synaptic carrier of endocannabinoid at central synapses and thus controls retrograde endocannabinoid signaling. Modulates inflammation by regulating PTGES induction via NF-kappa-B activation, and prostaglandin E2 (PGE2) biosynthesis during inflammation. The chain is Fatty acid-binding protein 5 (FABP5) from Bos taurus (Bovine).